Reading from the N-terminus, the 338-residue chain is Thiamine thiazole synthase (338 aa).

The interval 1–43 is disordered; it reads MSPVATESMYKPTTINQTAHQQAMDPLKSKQQSNATVNKPAFK. The span at 11–21 shows a compositional bias: polar residues; the sequence is KPTTINQTAHQ. Substrate contacts are provided by residues alanine 91, 112 to 113, glycine 120, and cysteine 185; that span reads ES. The residue at position 221 (cysteine 221) is a 2,3-didehydroalanine (Cys). Substrate-binding positions include aspartate 223, histidine 238, methionine 290, and 300 to 302; that span reads RMG.

It belongs to the THI4 family. As to quaternary structure, homooctamer. Fe cation serves as cofactor. In terms of processing, during the catalytic reaction, a sulfide is transferred from Cys-221 to a reaction intermediate, generating a dehydroalanine residue. In terms of tissue distribution, highly expressed in haustoria, and only in low amounts in intercellular hyphae. Found in the basal hyphae of the uredia, but not in the pedicels and only at very low levels in uredospores.

The protein localises to the cytoplasm. It localises to the nucleus. The catalysed reaction is [ADP-thiazole synthase]-L-cysteine + glycine + NAD(+) = [ADP-thiazole synthase]-dehydroalanine + ADP-5-ethyl-4-methylthiazole-2-carboxylate + nicotinamide + 3 H2O + 2 H(+). Involved in biosynthesis of the thiamine precursor thiazole. Catalyzes the conversion of NAD and glycine to adenosine diphosphate 5-(2-hydroxyethyl)-4-methylthiazole-2-carboxylic acid (ADT), an adenylated thiazole intermediate. The reaction includes an iron-dependent sulfide transfer from a conserved cysteine residue of the protein to a thiazole intermediate. The enzyme can only undergo a single turnover, which suggests it is a suicide enzyme. May have additional roles in adaptation to various stress conditions and in DNA damage tolerance. This is Thiamine thiazole synthase (THI2) from Uromyces fabae (Rust fungus).